Consider the following 116-residue polypeptide: Aspartate 1-decarboxylase (116 aa).

S25 acts as the Schiff-base intermediate with substrate; via pyruvic acid in catalysis. Pyruvic acid (Ser) is present on S25. A substrate-binding site is contributed by T57. Residue Y58 is the Proton donor of the active site. 73-75 is a binding site for substrate; sequence GAA.

Belongs to the PanD family. As to quaternary structure, heterooctamer of four alpha and four beta subunits. The cofactor is pyruvate. Post-translationally, is synthesized initially as an inactive proenzyme, which is activated by self-cleavage at a specific serine bond to produce a beta-subunit with a hydroxyl group at its C-terminus and an alpha-subunit with a pyruvoyl group at its N-terminus.

The protein localises to the cytoplasm. The enzyme catalyses L-aspartate + H(+) = beta-alanine + CO2. It functions in the pathway cofactor biosynthesis; (R)-pantothenate biosynthesis; beta-alanine from L-aspartate: step 1/1. Functionally, catalyzes the pyruvoyl-dependent decarboxylation of aspartate to produce beta-alanine. This Parabacteroides distasonis (strain ATCC 8503 / DSM 20701 / CIP 104284 / JCM 5825 / NCTC 11152) protein is Aspartate 1-decarboxylase.